An 88-amino-acid polypeptide reads, in one-letter code: Acylphosphatase (88 aa).

The 86-residue stretch at 3–88 (AARFVVSGVV…VPPTEDFVTG (86 aa)) folds into the Acylphosphatase-like domain. Catalysis depends on residues arginine 18 and asparagine 36.

The protein belongs to the acylphosphatase family.

The catalysed reaction is an acyl phosphate + H2O = a carboxylate + phosphate + H(+). In Xanthomonas oryzae pv. oryzae (strain MAFF 311018), this protein is Acylphosphatase (acyP).